We begin with the raw amino-acid sequence, 502 residues long: Lysine--tRNA ligase (502 aa).

The Mg(2+) site is built by E409 and E416.

This sequence belongs to the class-II aminoacyl-tRNA synthetase family. Homodimer. Requires Mg(2+) as cofactor.

Its subcellular location is the cytoplasm. It catalyses the reaction tRNA(Lys) + L-lysine + ATP = L-lysyl-tRNA(Lys) + AMP + diphosphate. The protein is Lysine--tRNA ligase of Shouchella clausii (strain KSM-K16) (Alkalihalobacillus clausii).